The chain runs to 427 residues: 12-alpha,13-alpha-dihydroxyfumitremorgin C prenyltransferase (427 aa).

Position 94 (E94) interacts with substrate. Dimethylallyl diphosphate contacts are provided by R105, K192, Y194, Y268, Q353, Y355, Y419, and Y423.

The protein belongs to the tryptophan dimethylallyltransferase family.

It catalyses the reaction 12alpha,13alpha-dihydroxyfumitremorgin C + dimethylallyl diphosphate = fumitremorgin B + diphosphate. It functions in the pathway mycotoxin biosynthesis. In terms of biological role, 12-alpha,13-alpha-dihydroxyfumitremorgin C prenyltransferase; part of the gene cluster that mediates the biosynthesis of fumitremorgins, indole alkaloids that carry not only intriguing chemical structures, but also interesting biological and pharmacological activities. The biosynthesis of fumitremorgin-type alkaloids begins by condensation of the two amino acids L-tryptophan and L-proline to brevianamide F, catalyzed by the non-ribosomal peptide synthetase ftmA. Brevianamide F is then prenylated by the prenyltransferase ftmPT1/ftmB in the presence of dimethylallyl diphosphate, resulting in the formation of tryprostatin B. The three cytochrome P450 monooxygenases, ftmP450-1/ftmC, ftmP450-2/ftmE and ftmP450-3/FtmG, are responsible for the conversion of tryprostatin B to 6-hydroxytryprostatin B, tryprostatin A to fumitremorgin C and fumitremorgin C to 12,13-dihydroxyfumitremorgin C, respectively. The putative methyltransferase ftmMT/ftmD is expected for the conversion of 6-hydroxytryprostatin B to tryprostatin A. FtmPT2/FtmH catalyzes the prenylation of 12,13-dihydroxyfumitre-morgin C in the presence of dimethylallyl diphosphate, resulting in the formation of fumitremorgin B. Fumitremorgin B is further converted to verruculogen by ftmOx1/ftmF via the insertion of an endoperoxide bond between the two prenyl moieties. In some fungal species, verruculogen is further converted to fumitremorgin A, but the enzymes involved in this step have not been identified yet. In Aspergillus fumigatus (Neosartorya fumigata), this protein is 12-alpha,13-alpha-dihydroxyfumitremorgin C prenyltransferase.